The following is a 293-amino-acid chain: uncharacterized protein (293 aa).

Disordered stretches follow at residues 1–114 and 268–293; these read MFLR…IPKL and EETA…GRML. Ser-34, Ser-35, and Ser-89 each carry phosphoserine. Composition is skewed to basic and acidic residues over residues 73 to 95 and 277 to 293; these read SSRD…RDKT and GQER…GRML.

This is an uncharacterized protein from Mus musculus (Mouse).